The following is a 160-amino-acid chain: Cathelin-related peptide SC5 (160 aa).

The signal sequence occupies residues 1–29 (METQRASLSLGRCSLWLLLLGLALPSASA). Residues 30-131 (QVLSYREAVL…DITCAEPQSV (102 aa)) constitute a propeptide that is removed on maturation. 2 disulfides stabilise this stretch: Cys-86–Cys-97 and Cys-108–Cys-125.

The protein belongs to the cathelicidin family.

It is found in the secreted. In terms of biological role, broad spectrum bactericidal agent. The polypeptide is Cathelin-related peptide SC5 (Ovis aries (Sheep)).